We begin with the raw amino-acid sequence, 432 residues long: Trigger factor (432 aa).

Residues 161 to 246 (EDRVTIDFTG…LKKVEERELP (86 aa)) enclose the PPIase FKBP-type domain.

This sequence belongs to the FKBP-type PPIase family. Tig subfamily. In terms of assembly, homodimer and monomer. In vivo most of the ribosomes are in complex with monomeric TF. Uncomplexed TF, however, is in a monomer-dimer equilibrium with approximately two thirds of TF existing in a dimeric state.

The protein resides in the cytoplasm. The catalysed reaction is [protein]-peptidylproline (omega=180) = [protein]-peptidylproline (omega=0). Its function is as follows. Involved in protein export. Acts as a chaperone by maintaining the newly synthesized protein in an open conformation. Functions as a peptidyl-prolyl cis-trans isomerase. The protein is Trigger factor of Shigella boydii serotype 4 (strain Sb227).